Reading from the N-terminus, the 214-residue chain is MNLILLGPPGAGKGTQAKLLIKKYRIPQISTGDILRAAVKDMTPMGGKAKSFMDAGALVPDEVVVGIIQERLNLADCSNGFILDGFPRTVAQADALAKVLSGLGRSIDHVISIVVDNEELLERVTGRRTCRNCGKGFHVSFDPPKSSGICDECSGELYQRDDDREDTMRKRLEVYWQQTSPLVEYYKNKSLLRSVEGVGSMEEIQQKIVSILQG.

10 to 15 (GAGKGT) contributes to the ATP binding site. The segment at 30 to 59 (STGDILRAAVKDMTPMGGKAKSFMDAGALV) is NMP. AMP is bound by residues threonine 31, arginine 36, 57–59 (ALV), 85–88 (GFPR), and glutamine 92. The interval 126-163 (GRRTCRNCGKGFHVSFDPPKSSGICDECSGELYQRDDD) is LID. ATP is bound at residue arginine 127. 4 residues coordinate Zn(2+): cysteine 130, cysteine 133, cysteine 150, and cysteine 153. Arginine 160 and arginine 171 together coordinate AMP. Glycine 199 is an ATP binding site.

The protein belongs to the adenylate kinase family. Monomer.

The protein localises to the cytoplasm. It catalyses the reaction AMP + ATP = 2 ADP. It participates in purine metabolism; AMP biosynthesis via salvage pathway; AMP from ADP: step 1/1. Its function is as follows. Catalyzes the reversible transfer of the terminal phosphate group between ATP and AMP. Plays an important role in cellular energy homeostasis and in adenine nucleotide metabolism. The protein is Adenylate kinase of Geotalea daltonii (strain DSM 22248 / JCM 15807 / FRC-32) (Geobacter daltonii).